The following is a 290-amino-acid chain: Appressoria-specific virulence factor GAS2 (290 aa).

An N-terminal signal peptide occupies residues 1-19; that stretch reads MKYTSAILISAFAATNVFA. Residue Asn-99 is glycosylated (N-linked (GlcNAc...) asparagine). Positions 121–140 are disordered; sequence LPRAGGGTSTPKGTEETGVK.

It is found in the cytoplasm. Functionally, appressoria-specific virulence factor required for appressorial penetration in host and lesion development. The sequence is that of Appressoria-specific virulence factor GAS2 from Pyricularia oryzae (strain 70-15 / ATCC MYA-4617 / FGSC 8958) (Rice blast fungus).